A 71-amino-acid polypeptide reads, in one-letter code: MAILKASEIRELSVEEMKGKIAELKRELMKEGVNKSTGGAPSNPGKISETKRTIARILTIMKEKEAQAENA.

The disordered stretch occupies residues 32–51 (GVNKSTGGAPSNPGKISETK).

The protein belongs to the universal ribosomal protein uL29 family.

This chain is Large ribosomal subunit protein uL29, found in Methanococcus maripaludis (strain DSM 14266 / JCM 13030 / NBRC 101832 / S2 / LL).